We begin with the raw amino-acid sequence, 286 residues long: Perivitellin-2 31 kDa subunit (286 aa).

The first 30 residues, 1–30, serve as a signal peptide directing secretion; the sequence is MVKKIHFVMERHASIVAFLLAVLALTESQA. Asparagine 101 is a glycosylation site (N-linked (GlcNAc...) asparagine).

It belongs to the tectonin family. As to quaternary structure, perivitellin-2 is a dimer of heterodimers held together head-to-tail by non-covalent forces. The heterodimer is composed of the tachylectin subunit (31 kDa) and the MACPF subunit (67 kDa) that are disulfide-linked. Post-translationally, PV2 is a very high density lipoprotein (VHDL). It contains 3.75% of lipids. The major lipid classes are free sterols and phospholipids and also have significant quantities of energy-providing triacylglycerides and free fatty acids. As to expression, produced by albumen secretory cells. Found in developing eggs.

It is found in the secreted. It localises to the target cell membrane. Its function is as follows. The egg defensive protein perivitellin-2 is a pore-forming two-subunit glycoprotein that affects both the nervous and digestive systems of mammals. In addition, it is a source of both structural and energetic molecules during embryonic development. The tachylectin subunit (31 kDa) binds target membranes while the MACPF subunit (67 kDa) disrupts lipid bilayers forming large pores (inner diameter of about 5.6 nm) altering the plasma membrance conductance. Both in vivo and in vitro, the protein shows wide pH range stability and is resistant to enzymatic proteolysis from gastrointestinal environments. It is cytotoxic to both epithelial and immune cells from the digestive system of mammals. It induces enterocyte death by a lytic mechanism and disrupts enterocyte monolayers in a dose-dependent manner. After oral administration to mice, it binds enterocytes and induces large dose-dependent morphological changes on their small intestine mucosa, reducing the absorptive surface. Additionally, it is detected in the Peyer's patches where it activates lymphoid follicles and triggers apoptosis. The toxin can also traverse the intestinal barrier and induce oral adaptive immunity with evidence of circulating antibody response. The toxin also shows hemagglutination properties thanks to the tachylectin subunit, but has no hemolytic activity. In addition to enterotoxin activity, the toxin also acts as a neurotoxin, since an intraperitoneal injection can induce paralysis of the mice rear limbs, followed by death. This is Perivitellin-2 31 kDa subunit from Pomacea maculata (Giant applesnail).